The sequence spans 494 residues: DUF21 domain-containing protein At4g14240 (494 aa).

Over 1–43 the chain is Extracellular; that stretch reads MHLINAVAAARILSGIGQSNGNNGGEAIPFGSFEWITYAGISC. The region spanning 31–213 is the CNNM transmembrane domain; that stretch reads GSFEWITYAG…GKGGELTHDE (183 aa). Residues 44–64 form a helical membrane-spanning segment; the sequence is FLVLFAGIMSGLTLGLMSLGL. The Cytoplasmic portion of the chain corresponds to 65-93; that stretch reads VELEILQRSGTPNEKKQAAAIFPVVQKQH. A helical transmembrane segment spans residues 94–114; the sequence is QLLVTLLLCNAMAMEGLPIYL. Residues 115–121 lie on the Extracellular side of the membrane; the sequence is DKLFNEY. The helical transmembrane segment at 122 to 142 threads the bilayer; that stretch reads VAIILSVTFVLAFGEVIPQAI. Over 143 to 159 the chain is Cytoplasmic; the sequence is CTRYGLAVGANFVWLVR. A helical transmembrane segment spans residues 160-180; that stretch reads ILMTLCYPIAFPIGKILDLVL. At 181–494 the chain is on the extracellular side; that stretch reads GHNDALFRRA…TITEPIRRNN (314 aa). 3 consecutive CBS domains span residues 232–292, 297–352, and 364–425; these read MTPI…TETL, CIRR…SNDS, and GNHD…IVDE. N-linked (GlcNAc...) asparagine glycosylation is found at asparagine 350 and asparagine 385. The interval 459–494 is disordered; sequence QKGTGGQNKQGQTNKVPGQEQDKMLGTITEPIRRNN.

It is found in the membrane. In Arabidopsis thaliana (Mouse-ear cress), this protein is DUF21 domain-containing protein At4g14240 (CBSDUF1).